The sequence spans 427 residues: Homoprotocatechuate catabolism bifunctional isomerase/decarboxylase (427 aa).

Approximate repeat units lie at residues 1–202 (MKGT…LENP) and 203–405 (VVDE…VGDE). A divalent metal cation is bound by residues Glu276, Glu278, and Asp307.

It belongs to the FAH family. As to quaternary structure, monomer. Mg(2+) is required as a cofactor.

It catalyses the reaction (2E,4Z)-5-hydroxypenta-2,4-diene-1,2,5-tricarboxylate = (3E,5R)-5-carboxy-2-oxohept-3-enedioate. The catalysed reaction is (3E,5R)-5-carboxy-2-oxohept-3-enedioate + H(+) = (4Z)-2-oxohept-4-enedioate + CO2. The protein operates within aromatic compound metabolism; 4-hydroxyphenylacetate degradation; pyruvate and succinate semialdehyde from 4-hydroxyphenylacetate: step 4/7. It participates in aromatic compound metabolism; 4-hydroxyphenylacetate degradation; pyruvate and succinate semialdehyde from 4-hydroxyphenylacetate: step 5/7. Its function is as follows. Decarboxylates OPET (5-oxo-pent-3-ene-1,2,5-tricarboxylic acid) into HHDD (2-hydroxy-hept-2,4-diene-1,7-dioate) and isomerizes it to OHED (2-oxo-hept-3-ene-1,7-dioate). This is Homoprotocatechuate catabolism bifunctional isomerase/decarboxylase (hpcE) from Escherichia coli.